The primary structure comprises 658 residues: Heat shock 70 kDa protein, mitochondrial (658 aa).

Residues 629–658 are disordered; the sequence is KLDSSASKSSSTENKENKDNTTEAEFTEKK. Residues 631-640 are compositionally biased toward low complexity; the sequence is DSSASKSSST. The segment covering 641 to 658 has biased composition (basic and acidic residues); the sequence is ENKENKDNTTEAEFTEKK.

It belongs to the heat shock protein 70 family.

It is found in the mitochondrion. Functionally, may function in protein folding and assembly, and disassembly of protein complexes. The chain is Heat shock 70 kDa protein, mitochondrial (mhsp70) from Dictyostelium discoideum (Social amoeba).